The primary structure comprises 562 residues: DNA ligase (562 aa).

Position 252 (Glu-252) interacts with ATP. Residue Lys-254 is the N6-AMP-lysine intermediate of the active site. The ATP site is built by Arg-259, Arg-274, Glu-303, Phe-343, Arg-419, and Lys-425.

It belongs to the ATP-dependent DNA ligase family. Requires Mg(2+) as cofactor.

It catalyses the reaction ATP + (deoxyribonucleotide)n-3'-hydroxyl + 5'-phospho-(deoxyribonucleotide)m = (deoxyribonucleotide)n+m + AMP + diphosphate.. DNA ligase that seals nicks in double-stranded DNA during DNA replication, DNA recombination and DNA repair. In Methanococcus aeolicus (strain ATCC BAA-1280 / DSM 17508 / OCM 812 / Nankai-3), this protein is DNA ligase.